The following is a 233-amino-acid chain: Protein Atu3128 (233 aa).

Belongs to the glycosyl hydrolase 88 family.

Seems to regulate the surface properties of the bacterium in the presence of plant cells or plant cell extracts. Mutations in this protein are responsible for an increased aggregation of the bacteria in the presence of pea root cap cells. This Agrobacterium fabrum (strain C58 / ATCC 33970) (Agrobacterium tumefaciens (strain C58)) protein is Protein Atu3128.